We begin with the raw amino-acid sequence, 477 residues long: Transposase for insertion sequence element IS231F (477 aa).

The protein belongs to the transposase 11 family.

Its function is as follows. Involved in the transposition of the insertion sequence. The sequence is that of Transposase for insertion sequence element IS231F from Bacillus thuringiensis subsp. israelensis.